The chain runs to 352 residues: Phosphoribosylformylglycinamidine cyclo-ligase (352 aa).

This sequence belongs to the AIR synthase family.

Its subcellular location is the cytoplasm. The enzyme catalyses 2-formamido-N(1)-(5-O-phospho-beta-D-ribosyl)acetamidine + ATP = 5-amino-1-(5-phospho-beta-D-ribosyl)imidazole + ADP + phosphate + H(+). It functions in the pathway purine metabolism; IMP biosynthesis via de novo pathway; 5-amino-1-(5-phospho-D-ribosyl)imidazole from N(2)-formyl-N(1)-(5-phospho-D-ribosyl)glycinamide: step 2/2. The protein is Phosphoribosylformylglycinamidine cyclo-ligase of Pseudomonas putida (strain W619).